Reading from the N-terminus, the 210-residue chain is MSSAQNVKKSILAPVLDNNPIALQVLGVCSALAVTTKLETAFVMTLAVTFVTALSNFSVSLIRNHIPNSVRIIVQMAIIASLVIVVDQVLKAYLYDISKQLSVFVGLIITNCIVMGRAEAFAMKSAPVPSLIDGIGNGLGYGFVLITVGFFRELFGSGKLFGLEVLPLVSNGGWYQPNGLMLLAPSAFFLIGFLIWVIRILKPEQVEAKE.

5 helical membrane passes run 42 to 62, 72 to 92, 103 to 123, 131 to 151, and 178 to 198; these read FVMTLAVTFVTALSNFSVSLI, IIVQMAIIASLVIVVDQVLKA, VFVGLIITNCIVMGRAEAFAM, LIDGIGNGLGYGFVLITVGFF, and NGLMLLAPSAFFLIGFLIWVI.

The protein belongs to the NqrDE/RnfAE family. As to quaternary structure, composed of six subunits; NqrA, NqrB, NqrC, NqrD, NqrE and NqrF.

It localises to the cell inner membrane. The enzyme catalyses a ubiquinone + n Na(+)(in) + NADH + H(+) = a ubiquinol + n Na(+)(out) + NAD(+). With respect to regulation, this reaction is tightly coupled to the Na(+) pumping activity and specifically requires Na(+) for activity. Inhibited by korormicin and 2-N-heptyl-4-hydroxyquinoline N-oxide (HQNO). Functionally, NQR complex catalyzes the reduction of ubiquinone-1 to ubiquinol by two successive reactions, coupled with the transport of Na(+) ions from the cytoplasm to the periplasm. NqrA to NqrE are probably involved in the second step, the conversion of ubisemiquinone to ubiquinol. In Vibrio alginolyticus, this protein is Na(+)-translocating NADH-quinone reductase subunit D.